Consider the following 489-residue polypeptide: UDP-N-acetylmuramoyl-L-alanyl-D-glutamate--2,6-diaminopimelate ligase (489 aa).

UDP-N-acetyl-alpha-D-muramoyl-L-alanyl-D-glutamate is bound at residue Ser-30. Residue 113–119 (GTNGKTS) coordinates ATP. Residues 155-156 (TT), Ser-182, Gln-188, and Arg-190 each bind UDP-N-acetyl-alpha-D-muramoyl-L-alanyl-D-glutamate. Lys-222 is subject to N6-carboxylysine. Meso-2,6-diaminopimelate-binding positions include Arg-388, 412-415 (DNPR), Gly-463, and Glu-467. A Meso-diaminopimelate recognition motif motif is present at residues 412 to 415 (DNPR).

It belongs to the MurCDEF family. MurE subfamily. Mg(2+) is required as a cofactor. In terms of processing, carboxylation is probably crucial for Mg(2+) binding and, consequently, for the gamma-phosphate positioning of ATP.

Its subcellular location is the cytoplasm. It carries out the reaction UDP-N-acetyl-alpha-D-muramoyl-L-alanyl-D-glutamate + meso-2,6-diaminopimelate + ATP = UDP-N-acetyl-alpha-D-muramoyl-L-alanyl-gamma-D-glutamyl-meso-2,6-diaminopimelate + ADP + phosphate + H(+). Its pathway is cell wall biogenesis; peptidoglycan biosynthesis. Functionally, catalyzes the addition of meso-diaminopimelic acid to the nucleotide precursor UDP-N-acetylmuramoyl-L-alanyl-D-glutamate (UMAG) in the biosynthesis of bacterial cell-wall peptidoglycan. The chain is UDP-N-acetylmuramoyl-L-alanyl-D-glutamate--2,6-diaminopimelate ligase from Coxiella burnetii (strain RSA 493 / Nine Mile phase I).